A 186-amino-acid chain; its full sequence is HGPRTase-like protein 3 (186 aa).

Belongs to the purine/pyrimidine phosphoribosyltransferase family. Archaeal HPRT subfamily.

Its function is as follows. May catalyze a purine salvage reaction, the substrate is unknown. The protein is HGPRTase-like protein 3 of Haloterrigena turkmenica (strain ATCC 51198 / DSM 5511 / JCM 9101 / NCIMB 13204 / VKM B-1734 / 4k) (Halococcus turkmenicus).